The sequence spans 313 residues: Foldase protein PrsA (313 aa).

The signal sequence occupies residues 1–20; sequence MKKKLLAGAITLLSVATLAA. The N-palmitoyl cysteine moiety is linked to residue cysteine 21. Cysteine 21 is lipidated: S-diacylglycerol cysteine. The 99-residue stretch at 143-241 folds into the PpiC domain; it reads TPDVTAQIIR…SQYYIVKLTK (99 aa).

This sequence belongs to the PrsA family.

It is found in the cell membrane. The catalysed reaction is [protein]-peptidylproline (omega=180) = [protein]-peptidylproline (omega=0). In terms of biological role, plays a major role in protein secretion by helping the post-translocational extracellular folding of several secreted proteins. This chain is Foldase protein PrsA, found in Streptococcus pneumoniae (strain P1031).